The chain runs to 109 residues: uncharacterized protein (109 aa).

This is an uncharacterized protein from Methanocaldococcus jannaschii (strain ATCC 43067 / DSM 2661 / JAL-1 / JCM 10045 / NBRC 100440) (Methanococcus jannaschii).